Consider the following 153-residue polypeptide: Large ribosomal subunit protein uL13 (153 aa).

The protein belongs to the universal ribosomal protein uL13 family. As to quaternary structure, part of the 50S ribosomal subunit.

Its function is as follows. This protein is one of the early assembly proteins of the 50S ribosomal subunit, although it is not seen to bind rRNA by itself. It is important during the early stages of 50S assembly. The protein is Large ribosomal subunit protein uL13 of Xanthobacter autotrophicus (strain ATCC BAA-1158 / Py2).